The following is a 71-amino-acid chain: Alpha-elapitoxin-Nn3a (71 aa).

Cystine bridges form between Cys-3/Cys-20, Cys-14/Cys-42, Cys-26/Cys-30, Cys-46/Cys-56, and Cys-57/Cys-62.

The protein belongs to the three-finger toxin family. Long-chain subfamily. Type II alpha-neurotoxin sub-subfamily. As to expression, expressed by the venom gland.

Its subcellular location is the secreted. Nicotinic acetylcholine receptor antagonist. Binds to muscle nicotinic acetylcholine receptor (nAChR) and inhibits acetylcholine from binding to the receptor, thereby impairing neuromuscular transmission. Produces peripheral paralysis by blocking neuromuscular transmission at the postsynaptic site. Induces concentration-dependent inhibition of indirect twitches and abolishes contractile responses of tissues to exogenous acetylcholine and carbachol, in the chick biventer cervicis nerve-muscle preparation at 100-300 nM (in vitro). Prior incubation of tissues with Indian polyvalent antivenom (1 ml/0.6 mg) prevents the neurotoxic effects at 100 nM (in vitro). Addition of Indian polyvalent antivenom (1 ml/0.6 mg) at the t90 time point partially restores the neurotoxic effects (in vitro). Displays a reversible antagonism of concentration-response curves to carbachol, with a pA2 of 8.17 (in vitro). This chain is Alpha-elapitoxin-Nn3a, found in Naja naja (Indian cobra).